The sequence spans 836 residues: CUB domain-containing protein 1 (836 aa).

Positions 1 to 29 (MAGLNCGVSIALLGVLLLGAARLPRGAEA) are cleaved as a signal peptide. Over 30–667 (FEIALPRESN…TLTPRTVDLT (638 aa)) the chain is Extracellular. N-linked (GlcNAc...) asparagine glycosylation is found at Asn39, Asn122, Asn180, Asn205, Asn270, Asn310, and Asn386. The CUB domain maps to 417–544 (CTDHRYCQRK…VSFIPYFKEE (128 aa)). Cys476 and Cys499 are oxidised to a cystine. Residues 668 to 688 (VILIAAVGGGVLLLSALGLII) form a helical membrane-spanning segment. The Cytoplasmic segment spans residues 689–836 (CCVKKKKKKT…NTQEPMEPAE (148 aa)). Residue Tyr734 is modified to Phosphotyrosine. Residues 776 to 836 (PPTICSRAPT…NTQEPMEPAE (61 aa)) are disordered.

Interacts with CDH2/N-cadherin, CDH3/P-cadherin, SDC1/syndecan-1, SDC4/syndecan-4 and the serine protease ST14/MT-SP1. Also interacts with SRC and PRKCG/protein kinase C gamma. Phosphorylated on tyrosine by kinases of the SRC family such as SRC and YES as well as by the protein kinase C gamma/PRKCG. Dephosphorylated by phosphotyrosine phosphatases. Also phosphorylated by suramin, a heparin analog. Tyrosine phosphorylated in response to dissociation of integrin alpha-6 beta-4 from laminin-5. Post-translationally, N-glycosylated. In terms of processing, a soluble form may also be produced by proteolytic cleavage at the cell surface (shedding). Another peptide of 80 kDa (p80) is present in cultured keratinocytes probably due to tryptic cleavage at an unidentified site on its N-terminal side. Converted to p80 by plasmin, a trypsin-like protease. Highly expressed in mitotic cells with low expression during interphase. Detected at highest levels in skeletal muscle and colon with lower levels in kidney, small intestine, placenta and lung. Up-regulated in a number of human tumor cell lines, as well as in colorectal cancer, breast carcinoma and lung cancer. Also expressed in cells with phenotypes reminiscent of mesenchymal stem cells and neural stem cells.

The protein localises to the cell membrane. It is found in the secreted. May be involved in cell adhesion and cell matrix association. May play a role in the regulation of anchorage versus migration or proliferation versus differentiation via its phosphorylation. May be a novel marker for leukemia diagnosis and for immature hematopoietic stem cell subsets. Belongs to the tetraspanin web involved in tumor progression and metastasis. In Homo sapiens (Human), this protein is CUB domain-containing protein 1 (CDCP1).